A 208-amino-acid polypeptide reads, in one-letter code: Imidazole glycerol phosphate synthase subunit HisH (208 aa).

A Glutamine amidotransferase type-1 domain is found at 1–206 (MIVIIDYDTG…KEVTYSCKSS (206 aa)). Cys-79 acts as the Nucleophile in catalysis. Active-site residues include His-181 and Glu-183.

Heterodimer of HisH and HisF.

It is found in the cytoplasm. It carries out the reaction 5-[(5-phospho-1-deoxy-D-ribulos-1-ylimino)methylamino]-1-(5-phospho-beta-D-ribosyl)imidazole-4-carboxamide + L-glutamine = D-erythro-1-(imidazol-4-yl)glycerol 3-phosphate + 5-amino-1-(5-phospho-beta-D-ribosyl)imidazole-4-carboxamide + L-glutamate + H(+). The enzyme catalyses L-glutamine + H2O = L-glutamate + NH4(+). The protein operates within amino-acid biosynthesis; L-histidine biosynthesis; L-histidine from 5-phospho-alpha-D-ribose 1-diphosphate: step 5/9. Its function is as follows. IGPS catalyzes the conversion of PRFAR and glutamine to IGP, AICAR and glutamate. The HisH subunit catalyzes the hydrolysis of glutamine to glutamate and ammonia as part of the synthesis of IGP and AICAR. The resulting ammonia molecule is channeled to the active site of HisF. The polypeptide is Imidazole glycerol phosphate synthase subunit HisH (Listeria monocytogenes serovar 1/2a (strain ATCC BAA-679 / EGD-e)).